The following is a 286-amino-acid chain: Bifunctional protein FolD (286 aa).

NADP(+) contacts are provided by residues 165 to 167 (GRS) and Ser-190.

Belongs to the tetrahydrofolate dehydrogenase/cyclohydrolase family. In terms of assembly, homodimer.

The catalysed reaction is (6R)-5,10-methylene-5,6,7,8-tetrahydrofolate + NADP(+) = (6R)-5,10-methenyltetrahydrofolate + NADPH. It catalyses the reaction (6R)-5,10-methenyltetrahydrofolate + H2O = (6R)-10-formyltetrahydrofolate + H(+). The protein operates within one-carbon metabolism; tetrahydrofolate interconversion. Catalyzes the oxidation of 5,10-methylenetetrahydrofolate to 5,10-methenyltetrahydrofolate and then the hydrolysis of 5,10-methenyltetrahydrofolate to 10-formyltetrahydrofolate. The polypeptide is Bifunctional protein FolD (Burkholderia lata (strain ATCC 17760 / DSM 23089 / LMG 22485 / NCIMB 9086 / R18194 / 383)).